We begin with the raw amino-acid sequence, 388 residues long: Diacylglycerol O-acyltransferase 2 (388 aa).

Topologically, residues 1–69 are cytoplasmic; it reads MKTLIAAYSG…NRSKVEKHLQ (69 aa). Residues 70 to 88 form a helical membrane-spanning segment; the sequence is VISVLQWVLSFLVLGVACS. Topologically, residues 89-92 are lumenal; that stretch reads VILM. Residues 93–112 form a helical membrane-spanning segment; that stretch reads YTFCTDCWLIAALYFTWLAF. At 113 to 388 the chain is on the cytoplasmic side; sequence DWNTPKKGGR…LPETEVLEVN (276 aa).

Belongs to the diacylglycerol acyltransferase family. In terms of assembly, forms multimeric complexes consisting of several DGAT2 subunits. Interacts with SLC27A1 and this interaction is enhanced in the presence of ZFYVE1.

The protein resides in the endoplasmic reticulum membrane. It is found in the lipid droplet. The protein localises to the cytoplasm. It localises to the perinuclear region. The enzyme catalyses an acyl-CoA + a 1,2-diacyl-sn-glycerol = a triacyl-sn-glycerol + CoA. It carries out the reaction all-trans-retinol + an acyl-CoA = an all-trans-retinyl ester + CoA. The catalysed reaction is 2-(9Z-octadecenoyl)-glycerol + (9Z)-octadecenoyl-CoA = 1,2-di-(9Z-octadecenoyl)-sn-glycerol + CoA. It catalyses the reaction 1,2-di-(9Z-octadecenoyl)-sn-glycerol + (9Z)-octadecenoyl-CoA = 1,2,3-tri-(9Z-octadecenoyl)-glycerol + CoA. The enzyme catalyses all-trans-retinol + hexadecanoyl-CoA = all-trans-retinyl hexadecanoate + CoA. It carries out the reaction 1-O-(9Z-octadecenyl)-glycerol + (9Z)-octadecenoyl-CoA = 1-O-(9Z-octadecyl)-3-(9Z-octadecenoyl)-glycerol + CoA. The catalysed reaction is 1-(9Z-octadecenoyl)-glycerol + (9Z)-octadecenoyl-CoA = 1,2-di-(9Z-octadecenoyl)-glycerol + CoA. It catalyses the reaction 1,2-di-(9Z-octadecenoyl)-sn-glycerol + hexadecanoyl-CoA = 1,2-di-(9Z)-octadecenoyl-3-hexadecanoyl-sn-glycerol + CoA. The enzyme catalyses 1,3-di-(9Z-octadecenoyl)-glycerol + (9Z)-octadecenoyl-CoA = 1,2,3-tri-(9Z-octadecenoyl)-glycerol + CoA. It carries out the reaction 2,3-di-(9Z)-octadecenoyl-sn-glycerol + (9Z)-octadecenoyl-CoA = 1,2,3-tri-(9Z-octadecenoyl)-glycerol + CoA. The catalysed reaction is 2-(9Z-octadecenoyl)-glycerol + hexadecanoyl-CoA = 1-hexadecanoyl-2-(9Z-octadecenoyl)-sn-glycerol + CoA. Its pathway is glycerolipid metabolism; triacylglycerol biosynthesis. Its activity is regulated as follows. Inhibited by niacin. Essential acyltransferase that catalyzes the terminal and only committed step in triacylglycerol synthesis by using diacylglycerol and fatty acyl CoA as substrates. Required for synthesis and storage of intracellular triglycerides. Probably plays a central role in cytosolic lipid accumulation. In liver, is primarily responsible for incorporating endogenously synthesized fatty acids into triglycerides. Also functions as an acyl-CoA retinol acyltransferase (ARAT). Also able to use 1-monoalkylglycerol (1-MAkG) as an acyl acceptor for the synthesis of monoalkyl-monoacylglycerol (MAMAG). The polypeptide is Diacylglycerol O-acyltransferase 2 (Rattus norvegicus (Rat)).